A 223-amino-acid polypeptide reads, in one-letter code: Receptor-transporting protein 2 (223 aa).

The Cytoplasmic segment spans residues 1–193 (MSTSLTTCEW…KKGQAGFISS (193 aa)). Residues 52 to 161 (ASGRFHCSWC…SEFCEACQEG (110 aa)) form a 3CxxC-type zinc finger. The chain crosses the membrane as a helical span at residues 194 to 216 (FFSFRWCLFWGTLCLVIVYLQFF). Residues 217-223 (RGRSGFL) lie on the Extracellular side of the membrane.

This sequence belongs to the TMEM7 family. Interacts with olfactory receptors. Predominantly expressed in olfactory and vomeronasal organs, in mature olfactory sensory neurons.

It localises to the cell membrane. Specifically promotes functional cell surface expression of olfactory receptors, but not of other GPCRs. This Mus musculus (Mouse) protein is Receptor-transporting protein 2 (Rtp2).